The sequence spans 624 residues: Translocator protein BipB (624 aa).

The tract at residues 54 to 99 (LASEQCDAQPVTDDARLDRLDDKPALRAPRSDAAHAADGNARGNGG) is disordered. Over residues 66–88 (DDARLDRLDDKPALRAPRSDAAH) the composition is skewed to basic and acidic residues. Positions 313-343 (EMQAKREAELQKKSDEYQEQVKKAEEMQKTM) form a coiled coil. Transmembrane regions (helical) follow at residues 359 to 379 (FAAA…GLAL), 405 to 425 (AILK…LVAC), and 434 to 454 (LAGA…AAFV).

The protein belongs to the SctE/SipB/YopB family.

The protein localises to the secreted. Its subcellular location is the host membrane. Its function is as follows. Plays a role in the bacterium-induced formation of multinucleated giant cell (MNGC), which is formed after host cell fusion, as well as in the intercellular spreading of bacteria and in the induction of apoptosis in macrophages. May act in concert with other effector proteins to induce fusion of host cell membranes. The polypeptide is Translocator protein BipB (bipB) (Burkholderia thailandensis (strain ATCC 700388 / DSM 13276 / CCUG 48851 / CIP 106301 / E264)).